A 106-amino-acid chain; its full sequence is Nucleoid-associated protein RPA0616 (106 aa).

This sequence belongs to the YbaB/EbfC family. In terms of assembly, homodimer.

It localises to the cytoplasm. The protein localises to the nucleoid. Binds to DNA and alters its conformation. May be involved in regulation of gene expression, nucleoid organization and DNA protection. This Rhodopseudomonas palustris (strain ATCC BAA-98 / CGA009) protein is Nucleoid-associated protein RPA0616.